We begin with the raw amino-acid sequence, 525 residues long: Bifunctional purine biosynthesis protein PurH (525 aa).

Residues 1–145 (MSNVERALIS…KNNASVGIVT (145 aa)) form the MGS-like domain.

It belongs to the PurH family.

It catalyses the reaction (6R)-10-formyltetrahydrofolate + 5-amino-1-(5-phospho-beta-D-ribosyl)imidazole-4-carboxamide = 5-formamido-1-(5-phospho-D-ribosyl)imidazole-4-carboxamide + (6S)-5,6,7,8-tetrahydrofolate. It carries out the reaction IMP + H2O = 5-formamido-1-(5-phospho-D-ribosyl)imidazole-4-carboxamide. It functions in the pathway purine metabolism; IMP biosynthesis via de novo pathway; 5-formamido-1-(5-phospho-D-ribosyl)imidazole-4-carboxamide from 5-amino-1-(5-phospho-D-ribosyl)imidazole-4-carboxamide (10-formyl THF route): step 1/1. It participates in purine metabolism; IMP biosynthesis via de novo pathway; IMP from 5-formamido-1-(5-phospho-D-ribosyl)imidazole-4-carboxamide: step 1/1. This is Bifunctional purine biosynthesis protein PurH from Alcanivorax borkumensis (strain ATCC 700651 / DSM 11573 / NCIMB 13689 / SK2).